Consider the following 98-residue polypeptide: Protein translation factor SUI1 homolog (98 aa).

Belongs to the SUI1 family.

This Pyrococcus abyssi (strain GE5 / Orsay) protein is Protein translation factor SUI1 homolog.